The following is a 459-amino-acid chain: MTMHVEVGPDSTAPPHSSGIKVIIIGLGIGGLAAAIECHRKGHSVIAFDKAQELKPVGDGIALAHNAVRVIEKWGKGTVGQELGRLSSRLNTTVIYDQTGRFIAEDKLDGFKAGEGHLLPRGELSQVMYKHAKSLGIDMRLASEVDEYWEDENSAGVIVDGEKITADCVVACDGVNSKARRHIIGYEPELRSSGSCVFRGWMTTEEPLVGSHWLLSHTDQADQVKVFAGDGVHVLLSTIQHGKMVFWLCTHKDNDCYDRKKEAPPTPEVDGMIHLIRDWPMRGQIESTIRKTLAKNVMHYPLLIREALSNWRSKGGRMVIIGDAAHPFLPVSGQGAAQAIEDAAVLAITLHLAGKEEVPLALHALEKIRLPRTALLQRSSLELERFWLNIDWPEVEKCPELLTIPRPKWIHGHDCQTHAYTEFAKVVSAIQMREEYHPLGGPRDSTNGESLLALLRQDT.

D49, A62, and R121 together coordinate FAD. R199 is a catalytic residue. The FAD site is built by D323 and A336.

Belongs to the paxM FAD-dependent monooxygenase family. The cofactor is FAD.

The enzyme catalyses asperlicin C + NADPH + O2 + H(+) = asperlicin E + NADP(+) + H2O. The catalysed reaction is asperlicin C + NADH + O2 + H(+) = asperlicin E + NAD(+) + H2O. In terms of biological role, catalyzes the conversion of asperlicin A to form asperlicin E, a potent cholecystokinin receptor CCK(A) antagonist. This chain is Asperlicin C monooxygenase, found in Petromyces alliaceus (Aspergillus alliaceus).